The following is a 312-amino-acid chain: Regulation of nuclear pre-mRNA domain-containing protein 1A (312 aa).

S2 carries the N-acetylserine modification. Positions 2-133 constitute a CID domain; sequence SAFSEAALEK…QLKHALYGDK (132 aa). Residues S153, S156, and S285 each carry the phosphoserine modification. Positions 244–286 form a coiled coil; it reads LADFLRCQKEALAEKEHKLEEYKRKLARVSLVRKELRARIQSL.

The protein belongs to the UPF0400 (RTT103) family. In terms of assembly, may form a heterodimer with RPRD1B. Associates with the RNA polymerase II subunit POLR2A (via CTD phosphorylated at 'Ser-2' and 'Ser-7' of the heptad repeats).

The protein localises to the nucleus. In terms of biological role, interacts with phosphorylated C-terminal heptapeptide repeat domain (CTD) of the largest RNA polymerase II subunit POLR2A, and participates in dephosphorylation of the CTD by RPAP2. May act as a negative regulator of cyclin-D1 (CCND1) and cyclin-E (CCNE1) in the cell cycle. The protein is Regulation of nuclear pre-mRNA domain-containing protein 1A (Rprd1a) of Mus musculus (Mouse).